The chain runs to 306 residues: Acetyl-coenzyme A carboxylase carboxyl transferase subunit beta (306 aa).

The CoA carboxyltransferase N-terminal domain occupies 27–296; it reads LWHKCPSCEA…PKFVAAPIEP (270 aa). Residues C31, C34, C50, and C53 each coordinate Zn(2+). The segment at 31-53 adopts a C4-type zinc-finger fold; the sequence is CPSCEAVLYRPELEKTLDVCPKC.

The protein belongs to the AccD/PCCB family. Acetyl-CoA carboxylase is a heterohexamer composed of biotin carboxyl carrier protein (AccB), biotin carboxylase (AccC) and two subunits each of ACCase subunit alpha (AccA) and ACCase subunit beta (AccD). Requires Zn(2+) as cofactor.

Its subcellular location is the cytoplasm. It catalyses the reaction N(6)-carboxybiotinyl-L-lysyl-[protein] + acetyl-CoA = N(6)-biotinyl-L-lysyl-[protein] + malonyl-CoA. The protein operates within lipid metabolism; malonyl-CoA biosynthesis; malonyl-CoA from acetyl-CoA: step 1/1. Functionally, component of the acetyl coenzyme A carboxylase (ACC) complex. Biotin carboxylase (BC) catalyzes the carboxylation of biotin on its carrier protein (BCCP) and then the CO(2) group is transferred by the transcarboxylase to acetyl-CoA to form malonyl-CoA. The polypeptide is Acetyl-coenzyme A carboxylase carboxyl transferase subunit beta (Pseudomonas fluorescens (strain Pf0-1)).